Here is an 88-residue protein sequence, read N- to C-terminus: Synaptonemal complex central element protein 3 (88 aa).

Residues 8–75 (ERSYDNMLKM…FLNCKEEMEK (68 aa)) adopt a coiled-coil conformation.

Homodimer. Can form higher-order homooligomers. Interacts with SYCP1 (via tetrameric core); the interaction remodels SYCP1 homotetramers to 2:1 heterotrimers with SYCE3. SYCP1/SYCE3 heterotrimers form lattice assemblies as part of the mature synaptonemal complex via both lateral and head-to-head interactions. Interacts with the SYCE1-SIX6OS1 complex; the interaction recruits the SYCE1-SIX6OS1 complex to the central element of the synaptonemal complex. Interacts with the SYCE2-TEX12 complex; the interaction promotes fibrous assembly of SYCE2-TEX12 as part of the synaptonemal complex central element. Interacts with SYCE1. Interacts with SYCE2. Interacts with proteasome subunit PSMA8; to participate in meiosis progression during spermatogenesis. Interacts with SPO16. As to expression, expression is restricted to spermatocytes and is absent in spermatogonia, spermatids and spermatogonia (at protein level). Expressed in adult testis and embryonic ovary. Expressed in the convoluted seminiferous tubules in spermatogonia and spermatocytes.

It localises to the nucleus. The protein resides in the chromosome. Functionally, major component of the transverse central element of synaptonemal complexes (SCS), formed between homologous chromosomes during meiotic prophase. Required for the assembly of the central element of the synaptonemal complex during meiosis, via remodeling of SYCP1 lattice structures and promoting recruitment of SYCE2-TEX12 and SYCE1-SIX60S1 complexes. Required for chromosome loading of the central element-specific SCS proteins, and for initiating synapsis between homologous chromosomes. Chromosome loading appears to require SYCP1. Required for fertility and normal testis development. May play a role in apoptosis of spermatogenic cells and pathogenesis of cryptorchidism. This chain is Synaptonemal complex central element protein 3, found in Mus musculus (Mouse).